We begin with the raw amino-acid sequence, 119 residues long: uncharacterized protein (119 aa).

Residues 67–119 form a disordered region; the sequence is LGLKEVQKKSNEGLNEVQGVADINKQKRPANSQDSSSVEGDIQNFLEKVTGKN. The segment covering 95 to 104 has biased composition (polar residues); it reads PANSQDSSSV.

This is an uncharacterized protein from Anabaena variabilis.